The primary structure comprises 346 residues: Cell shape-determining protein MreC (346 aa).

Positions 89–118 form a coiled coil; that stretch reads NRRLKAELAEMRQWRDRALALQDQNDRFKS. The tract at residues 292-346 is disordered; that stretch reads SLPPVTTEDPQTSILSNPVSRPVAPTPSPATATPSAAPAARPATTATPPQTGAPR. Over residues 299 to 308 the composition is skewed to polar residues; it reads EDPQTSILSN. A compositionally biased stretch (low complexity) spans 309 to 340; it reads PVSRPVAPTPSPATATPSAAPAARPATTATPP.

It belongs to the MreC family. In terms of assembly, interacts with penicillin-binding proteins (PBP2, PBP1a, PBP1b, PBP2a and PBP2b). Interacts with outer membrane proteins belonging to the TonB-dependent receptor family of transport proteins.

Its subcellular location is the periplasm. Its function is as follows. Involved in formation and maintenance of cell shape. Required for the spatial organization of components of the peptidoglycan-synthesizing holoenzyme in the periplasm and peptidoglycan synthetic activity. This chain is Cell shape-determining protein MreC, found in Caulobacter vibrioides (strain NA1000 / CB15N) (Caulobacter crescentus).